We begin with the raw amino-acid sequence, 205 residues long: Ribosomal RNA small subunit methyltransferase G (205 aa).

Residues G76, L81, I127 to E128, and R140 contribute to the S-adenosyl-L-methionine site.

Belongs to the methyltransferase superfamily. RNA methyltransferase RsmG family.

It localises to the cytoplasm. The enzyme catalyses guanosine(527) in 16S rRNA + S-adenosyl-L-methionine = N(7)-methylguanosine(527) in 16S rRNA + S-adenosyl-L-homocysteine. Specifically methylates the N7 position of guanine in position 527 of 16S rRNA. This Francisella tularensis subsp. tularensis (strain FSC 198) protein is Ribosomal RNA small subunit methyltransferase G.